Here is a 419-residue protein sequence, read N- to C-terminus: Subtilisin-like protease 2 (419 aa).

The N-terminal stretch at 1 to 16 (MQLLNFGLLLLPFVAG) is a signal peptide. Residues 17–122 (DLAPQPEPLL…VHPDQHVYLA (106 aa)) constitute a propeptide that is removed on maturation. In terms of domain architecture, Inhibitor I9 spans 36–122 (QYIVTLKEGL…VHPDQHVYLA (87 aa)). The Peptidase S8 domain maps to 131–419 (RWGLGYMSSK…IQERKFKLPK (289 aa)). Catalysis depends on charge relay system residues aspartate 169 and histidine 201. Residues asparagine 248, asparagine 261, and asparagine 348 are each glycosylated (N-linked (GlcNAc...) asparagine). Residue serine 357 is the Charge relay system of the active site. An N-linked (GlcNAc...) asparagine glycan is attached at asparagine 388.

It belongs to the peptidase S8 family.

The protein resides in the secreted. In terms of biological role, secreted subtilisin-like serine protease with keratinolytic activity that contributes to pathogenicity. This is Subtilisin-like protease 2 (SUB2) from Arthroderma benhamiae (Trichophyton mentagrophytes).